The chain runs to 382 residues: MKKVIILGSTGSIGTQTLDVIKNFRENFEIVGLTAYNNVELLSKQIREFNPKVVAVKDEDKANQLRENLKKNVEILTGSKGLQEIVKYDADLVVVAVEGIAGLIPTVTAIQRGKDIALANKEVLVTAGQIVMDLVKKKDITLLPVDSEHSAILQCLRGNDKKEVSRLILTASGGPFRGKKKEDLRKVTVNEALNHPNWKMGKKITIDSATLMNKGFEVIEAKWLFDISEDKIDVIVHPQSIIHSMVEYIDGSVIAQLAAADMRIPIQYALNYPTRNYINGINFLDFSLTTQLTFEKPDLETFRCLSLAYEALKIGGTMTTVLNAADEIAVSLFLNKKIEFLQIAEIIEESMKEHNNIQNPTLDDIINVDKEVKEKIAKKYMR.

NADPH is bound by residues threonine 10, glycine 11, serine 12, isoleucine 13, asparagine 38, and asparagine 120. Lysine 121 provides a ligand contact to 1-deoxy-D-xylulose 5-phosphate. Position 122 (glutamate 122) interacts with NADPH. A Mn(2+)-binding site is contributed by aspartate 146. Residues serine 147, glutamate 148, serine 172, and histidine 195 each contribute to the 1-deoxy-D-xylulose 5-phosphate site. Mn(2+) is bound at residue glutamate 148. Glycine 201 lines the NADPH pocket. 1-deoxy-D-xylulose 5-phosphate-binding residues include serine 208, asparagine 213, lysine 214, and glutamate 217. Glutamate 217 is a Mn(2+) binding site.

This sequence belongs to the DXR family. Mg(2+) is required as a cofactor. It depends on Mn(2+) as a cofactor.

It carries out the reaction 2-C-methyl-D-erythritol 4-phosphate + NADP(+) = 1-deoxy-D-xylulose 5-phosphate + NADPH + H(+). It participates in isoprenoid biosynthesis; isopentenyl diphosphate biosynthesis via DXP pathway; isopentenyl diphosphate from 1-deoxy-D-xylulose 5-phosphate: step 1/6. Catalyzes the NADPH-dependent rearrangement and reduction of 1-deoxy-D-xylulose-5-phosphate (DXP) to 2-C-methyl-D-erythritol 4-phosphate (MEP). This is 1-deoxy-D-xylulose 5-phosphate reductoisomerase from Thermoanaerobacter pseudethanolicus (strain ATCC 33223 / 39E) (Clostridium thermohydrosulfuricum).